The following is a 127-amino-acid chain: Turripeptide OL172 (127 aa).

Positions 1–20 (MFSTLIFLTAVTLLMMPSQT) are cleaved as a signal peptide. Residues 42–43 (QR) constitute a propeptide that is removed on maturation. The residue at position 44 (Gln-44) is a Pyrrolidone carboxylic acid. The propeptide occupies 73 to 75 (QRK). At Gln-76 the chain carries Pyrrolidone carboxylic acid. A propeptide spanning residues 104–106 (QRK) is cleaved from the precursor. At Gln-107 the chain carries Pyrrolidone carboxylic acid.

The turripeptide OL172 conotoxin-like contains 2 disulfide bonds. In terms of tissue distribution, expressed by the venom duct.

It localises to the secreted. Acts as a neurotoxin by inhibiting an ion channel. This chain is Turripeptide OL172, found in Iotyrris olangoensis (Sea snail).